A 397-amino-acid chain; its full sequence is Elongation factor Tu (397 aa).

One can recognise a tr-type G domain in the interval 10–207 (KPHVNIGTIG…ACDSYIPEPQ (198 aa)). The tract at residues 19 to 26 (GHIDHGKT) is G1. 19 to 26 (GHIDHGKT) provides a ligand contact to GTP. Threonine 26 contacts Mg(2+). Residues 60–64 (GITIA) form a G2 region. The interval 81–84 (DCPG) is G3. Residues 81–85 (DCPGH) and 136–139 (NKCD) contribute to the GTP site. Residues 136 to 139 (NKCD) form a G4 region. Positions 174 to 176 (SAL) are G5.

It belongs to the TRAFAC class translation factor GTPase superfamily. Classic translation factor GTPase family. EF-Tu/EF-1A subfamily. Monomer.

The protein localises to the cytoplasm. It catalyses the reaction GTP + H2O = GDP + phosphate + H(+). Functionally, GTP hydrolase that promotes the GTP-dependent binding of aminoacyl-tRNA to the A-site of ribosomes during protein biosynthesis. The chain is Elongation factor Tu from Nitratidesulfovibrio vulgaris (strain DSM 19637 / Miyazaki F) (Desulfovibrio vulgaris).